The primary structure comprises 434 residues: Methylenetetrahydrofolate--tRNA-(uracil-5-)-methyltransferase TrmFO (434 aa).

10-15 serves as a coordination point for FAD; that stretch reads GAGLAG.

It belongs to the MnmG family. TrmFO subfamily. Requires FAD as cofactor.

It is found in the cytoplasm. It carries out the reaction uridine(54) in tRNA + (6R)-5,10-methylene-5,6,7,8-tetrahydrofolate + NADH + H(+) = 5-methyluridine(54) in tRNA + (6S)-5,6,7,8-tetrahydrofolate + NAD(+). The enzyme catalyses uridine(54) in tRNA + (6R)-5,10-methylene-5,6,7,8-tetrahydrofolate + NADPH + H(+) = 5-methyluridine(54) in tRNA + (6S)-5,6,7,8-tetrahydrofolate + NADP(+). Its function is as follows. Catalyzes the folate-dependent formation of 5-methyl-uridine at position 54 (M-5-U54) in all tRNAs. The polypeptide is Methylenetetrahydrofolate--tRNA-(uracil-5-)-methyltransferase TrmFO (Bacillus cytotoxicus (strain DSM 22905 / CIP 110041 / 391-98 / NVH 391-98)).